A 456-amino-acid chain; its full sequence is Glycerol-3-phosphate acyltransferase 4 (456 aa).

A signal peptide spans 1–37 (MFLLLPFDSLIVSLLGISLTVLFTLLLVFIIVPAVFG). Helical transmembrane passes span 156–176 (ISLR…CLLL) and 180–200 (IALA…VGYL). N247 is a glycosylation site (N-linked (GlcNAc...) asparagine). Positions 248–253 (HTSPID) match the HXXXXD motif motif. 3 N-linked (GlcNAc...) asparagine glycosylation sites follow: N327, N328, and N362.

Belongs to the 1-acyl-sn-glycerol-3-phosphate acyltransferase family.

The protein resides in the endoplasmic reticulum membrane. It carries out the reaction sn-glycerol 3-phosphate + an acyl-CoA = a 1-acyl-sn-glycero-3-phosphate + CoA. It catalyses the reaction dodecanoyl-CoA + sn-glycerol 3-phosphate = 1-dodecanoyl-sn-glycerol 3-phosphate + CoA. The enzyme catalyses sn-glycerol 3-phosphate + hexadecanoyl-CoA = 1-hexadecanoyl-sn-glycero-3-phosphate + CoA. The catalysed reaction is sn-glycerol 3-phosphate + octadecanoyl-CoA = 1-octadecanoyl-sn-glycero-3-phosphate + CoA. It carries out the reaction sn-glycerol 3-phosphate + (9Z)-octadecenoyl-CoA = 1-(9Z-octadecenoyl)-sn-glycero-3-phosphate + CoA. It catalyses the reaction (9Z,12Z)-octadecadienoyl-CoA + sn-glycerol 3-phosphate = 1-(9Z,12Z)-octadecadienoyl-sn-glycero-3-phosphate + CoA. It participates in phospholipid metabolism; CDP-diacylglycerol biosynthesis; CDP-diacylglycerol from sn-glycerol 3-phosphate: step 1/3. Its function is as follows. Converts glycerol-3-phosphate to 1-acyl-sn-glycerol-3-phosphate (lysophosphatidic acid or LPA) by incorporating an acyl moiety at the sn-1 position of the glycerol backbone. Active against both saturated and unsaturated long-chain fatty acyl-CoAs. Protects cells against lipotoxicity. The sequence is that of Glycerol-3-phosphate acyltransferase 4 from Bos taurus (Bovine).